Here is an 88-residue protein sequence, read N- to C-terminus: Large ribosomal subunit protein eL37 (88 aa).

Cysteine 19, cysteine 22, cysteine 34, and cysteine 37 together coordinate Zn(2+). Residues 19 to 37 (CNRCGKRSFHVQKKTCASC) form a C4-type zinc finger.

It belongs to the eukaryotic ribosomal protein eL37 family. The cofactor is Zn(2+).

In terms of biological role, binds to the 23S rRNA. The chain is Large ribosomal subunit protein eL37 (RPL37) from Debaryomyces hansenii (strain ATCC 36239 / CBS 767 / BCRC 21394 / JCM 1990 / NBRC 0083 / IGC 2968) (Yeast).